The chain runs to 290 residues: Short neuropeptide F (290 aa).

An N-terminal signal peptide occupies residues 1–32 (MFRFNPQLSHGCALALICCLLNLLMMHQPTNA). Residues 33 to 87 (ELSPVVQGEFFLPILPDDHPPNTDTSFGGPISNLYDNLLQREYAGPVVFPNHQVE) constitute a propeptide that is removed on maturation. Phenylalanine amide is present on residues phenylalanine 100 and phenylalanine 134. A propeptide spanning residues 138 to 290 (DPTLPQMRRT…IETSSIAPKN (153 aa)) is cleaved from the precursor. Positions 238–290 (VAGYANDGDDTEAQLDEDTSEFQREARKPMRLRWGRSTGKAPQIETSSIAPKN) are disordered. Residues 244–257 (DGDDTEAQLDEDTS) are compositionally biased toward acidic residues. Over residues 281-290 (IETSSIAPKN) the composition is skewed to polar residues.

Belongs to the NPY family.

It is found in the secreted. In terms of biological role, plays a role in controlling food intake and regulating body size. This Drosophila pseudoobscura pseudoobscura (Fruit fly) protein is Short neuropeptide F.